Consider the following 301-residue polypeptide: Ribonuclease HIII (301 aa).

The region spanning 90–301 (TPHIGIDESG…LDAILGKVGK (212 aa)) is the RNase H type-2 domain. The a divalent metal cation site is built by D96, E97, and D198.

It belongs to the RNase HII family. RnhC subfamily. The cofactor is Mn(2+). Requires Mg(2+) as cofactor.

It is found in the cytoplasm. It catalyses the reaction Endonucleolytic cleavage to 5'-phosphomonoester.. In terms of biological role, endonuclease that specifically degrades the RNA of RNA-DNA hybrids. The protein is Ribonuclease HIII of Protochlamydia amoebophila (strain UWE25).